Here is a 189-residue protein sequence, read N- to C-terminus: UPF0301 protein PA14_05290 (189 aa).

Belongs to the UPF0301 (AlgH) family.

The protein is UPF0301 protein PA14_05290 of Pseudomonas aeruginosa (strain UCBPP-PA14).